A 376-amino-acid polypeptide reads, in one-letter code: NifS-like protein (376 aa).

Residues 58–59 and 184–186 each bind pyridoxal 5'-phosphate; these read SE and SLN.

Belongs to the class-V pyridoxal-phosphate-dependent aminotransferase family. NifS/IscS subfamily. Pyridoxal 5'-phosphate serves as cofactor.

It is found in the virion. The chain is NifS-like protein from African swine fever virus (isolate Tick/Malawi/Lil 20-1/1983) (ASFV).